A 230-amino-acid chain; its full sequence is Probable methylthioribulose-1-phosphate dehydratase (230 aa).

C87 provides a ligand contact to substrate. Positions 105 and 107 each coordinate Zn(2+). E129 functions as the Proton donor/acceptor in the catalytic mechanism. H185 contributes to the Zn(2+) binding site.

It belongs to the aldolase class II family. MtnB subfamily. Zn(2+) serves as cofactor.

It is found in the cytoplasm. It catalyses the reaction 5-(methylsulfanyl)-D-ribulose 1-phosphate = 5-methylsulfanyl-2,3-dioxopentyl phosphate + H2O. The protein operates within amino-acid biosynthesis; L-methionine biosynthesis via salvage pathway; L-methionine from S-methyl-5-thio-alpha-D-ribose 1-phosphate: step 2/6. Catalyzes the dehydration of methylthioribulose-1-phosphate (MTRu-1-P) into 2,3-diketo-5-methylthiopentyl-1-phosphate (DK-MTP-1-P). The polypeptide is Probable methylthioribulose-1-phosphate dehydratase (Drosophila grimshawi (Hawaiian fruit fly)).